Reading from the N-terminus, the 1604-residue chain is Transposon Ty1-DR4 Gag-Pol polyprotein (1604 aa).

3 stretches are compositionally biased toward polar residues: residues 1 to 23 (MESQ…SVTS), 48 to 60 (TKAN…TPAS), and 127 to 152 (QSQF…GNTF). Disordered stretches follow at residues 1–93 (MESQ…MMTQ), 126–174 (PQSQ…PPPM), and 352–421 (GSRN…SKST). The span at 153 to 165 (TDSSSADSDMTST) shows a compositional bias: low complexity. Residues 299-401 (NNGIHINNKV…NSKSKTARAH (103 aa)) form an RNA-binding region. A compositionally biased stretch (low complexity) spans 402–418 (NVSTSNNSPSTDNDSIS). Ser416 carries the post-translational modification Phosphoserine. The active-site For protease activity; shared with dimeric partner is the Asp461. Residues 583–640 (NVHTSESTRKYPYPFIHRMLAHANAQTIRYSLKNNTITYFNESDVDWSSAIDYQCPDC) are integrase-type zinc finger-like. One can recognise an Integrase catalytic domain in the interval 660–835 (NSYEPFQYLH…AGLDISTLLP (176 aa)). Asp671 and Asp736 together coordinate Mg(2+). Disordered regions lie at residues 956-1087 (SKAV…ETEK), 1092-1111 (RSPS…NIVP), and 1130-1187 (DLPL…DNET). Residues 960 to 969 (SPTDSTPPST) are compositionally biased toward low complexity. Over residues 1005–1015 (STPQISNIEST) the composition is skewed to polar residues. Over residues 1038–1053 (ESSHASKSKDFRHSDS) the composition is skewed to basic and acidic residues. Polar residues-rich tracts occupy residues 1054-1082 (YSEN…QISD) and 1101-1111 (PENNSSHNIVP). The Bipartite nuclear localization signal signature appears at 1178 to 1212 (KKRSLEDNETEIKVSRDTWNTKNMRSLEPPRSKKR). The region spanning 1338-1476 (NNYYITQLDI…DILGLEIKYQ (139 aa)) is the Reverse transcriptase Ty1/copia-type domain. The Mg(2+) site is built by Asp1346, Asp1427, and Asp1428.

As to quaternary structure, the capsid protein forms a homotrimer, from which the VLPs are assembled. The protease is a homodimer, whose active site consists of two apposed aspartic acid residues. Initially, virus-like particles (VLPs) are composed of the structural unprocessed proteins Gag and Gag-Pol, and also contain the host initiator methionine tRNA (tRNA(i)-Met) which serves as a primer for minus-strand DNA synthesis, and a dimer of genomic Ty RNA. Processing of the polyproteins occurs within the particle and proceeds by an ordered pathway, called maturation. First, the protease (PR) is released by autocatalytic cleavage of the Gag-Pol polyprotein yielding capsid protein p45 and a Pol-p154 precursor protein. This cleavage is a prerequisite for subsequent processing of Pol-p154 at the remaining sites to release the mature structural and catalytic proteins. Maturation takes place prior to the RT reaction and is required to produce transposition-competent VLPs.

The protein resides in the cytoplasm. It is found in the nucleus. It catalyses the reaction DNA(n) + a 2'-deoxyribonucleoside 5'-triphosphate = DNA(n+1) + diphosphate. The catalysed reaction is Endonucleolytic cleavage to 5'-phosphomonoester.. Capsid protein (CA) is the structural component of the virus-like particle (VLP), forming the shell that encapsulates the retrotransposons dimeric RNA genome. The particles are assembled from trimer-clustered units and there are holes in the capsid shells that allow for the diffusion of macromolecules. CA also has nucleocapsid-like chaperone activity, promoting primer tRNA(i)-Met annealing to the multipartite primer-binding site (PBS), dimerization of Ty1 RNA and initiation of reverse transcription. Its function is as follows. The aspartyl protease (PR) mediates the proteolytic cleavages of the Gag and Gag-Pol polyproteins after assembly of the VLP. In terms of biological role, reverse transcriptase/ribonuclease H (RT) is a multifunctional enzyme that catalyzes the conversion of the retro-elements RNA genome into dsDNA within the VLP. The enzyme displays a DNA polymerase activity that can copy either DNA or RNA templates, and a ribonuclease H (RNase H) activity that cleaves the RNA strand of RNA-DNA heteroduplexes during plus-strand synthesis and hydrolyzes RNA primers. The conversion leads to a linear dsDNA copy of the retrotransposon that includes long terminal repeats (LTRs) at both ends. Functionally, integrase (IN) targets the VLP to the nucleus, where a subparticle preintegration complex (PIC) containing at least integrase and the newly synthesized dsDNA copy of the retrotransposon must transit the nuclear membrane. Once in the nucleus, integrase performs the integration of the dsDNA into the host genome. The chain is Transposon Ty1-DR4 Gag-Pol polyprotein (TY1B-DR4) from Saccharomyces cerevisiae (strain ATCC 204508 / S288c) (Baker's yeast).